The following is a 389-amino-acid chain: Chalcone synthase 3 (389 aa).

The active site involves Cys-164.

This sequence belongs to the thiolase-like superfamily. Chalcone/stilbene synthases family.

It catalyses the reaction (E)-4-coumaroyl-CoA + 3 malonyl-CoA + 3 H(+) = 2',4,4',6'-tetrahydroxychalcone + 3 CO2 + 4 CoA. Its pathway is secondary metabolite biosynthesis; flavonoid biosynthesis. The primary product of this enzyme is 4,2',4',6'-tetrahydroxychalcone (also termed naringenin-chalcone or chalcone) which can under specific conditions spontaneously isomerize into naringenin. The chain is Chalcone synthase 3 (CHS3) from Pisum sativum (Garden pea).